A 132-amino-acid chain; its full sequence is Small ribosomal subunit protein uS8 (132 aa).

The protein belongs to the universal ribosomal protein uS8 family. In terms of assembly, part of the 30S ribosomal subunit. Contacts proteins S5 and S12.

One of the primary rRNA binding proteins, it binds directly to 16S rRNA central domain where it helps coordinate assembly of the platform of the 30S subunit. The polypeptide is Small ribosomal subunit protein uS8 (Streptomyces avermitilis (strain ATCC 31267 / DSM 46492 / JCM 5070 / NBRC 14893 / NCIMB 12804 / NRRL 8165 / MA-4680)).